The chain runs to 255 residues: 1-(5-phosphoribosyl)-5-[(5-phosphoribosylamino)methylideneamino] imidazole-4-carboxamide isomerase (255 aa).

Residue Asp-8 is the Proton acceptor of the active site. Asp-129 acts as the Proton donor in catalysis.

It belongs to the HisA/HisF family.

The protein localises to the cytoplasm. The enzyme catalyses 1-(5-phospho-beta-D-ribosyl)-5-[(5-phospho-beta-D-ribosylamino)methylideneamino]imidazole-4-carboxamide = 5-[(5-phospho-1-deoxy-D-ribulos-1-ylimino)methylamino]-1-(5-phospho-beta-D-ribosyl)imidazole-4-carboxamide. It participates in amino-acid biosynthesis; L-histidine biosynthesis; L-histidine from 5-phospho-alpha-D-ribose 1-diphosphate: step 4/9. The protein is 1-(5-phosphoribosyl)-5-[(5-phosphoribosylamino)methylideneamino] imidazole-4-carboxamide isomerase of Synechococcus sp. (strain CC9902).